Here is a 209-residue protein sequence, read N- to C-terminus: Large ribosomal subunit protein uL3 (209 aa).

Residues 133–152 (THGNSLSHRVPGSIGQNQTP) are disordered. At glutamine 150 the chain carries N5-methylglutamine.

The protein belongs to the universal ribosomal protein uL3 family. As to quaternary structure, part of the 50S ribosomal subunit. Forms a cluster with proteins L14 and L19. Methylated by PrmB.

Functionally, one of the primary rRNA binding proteins, it binds directly near the 3'-end of the 23S rRNA, where it nucleates assembly of the 50S subunit. The sequence is that of Large ribosomal subunit protein uL3 from Shigella sonnei (strain Ss046).